The chain runs to 249 residues: Ribosomal RNA small subunit methyltransferase J (249 aa).

S-adenosyl-L-methionine is bound by residues 101-102 (RD), 117-118 (ER), and Asp171.

It belongs to the methyltransferase superfamily. RsmJ family.

It is found in the cytoplasm. It catalyses the reaction guanosine(1516) in 16S rRNA + S-adenosyl-L-methionine = N(2)-methylguanosine(1516) in 16S rRNA + S-adenosyl-L-homocysteine + H(+). Specifically methylates the guanosine in position 1516 of 16S rRNA. This is Ribosomal RNA small subunit methyltransferase J from Tolumonas auensis (strain DSM 9187 / NBRC 110442 / TA 4).